Reading from the N-terminus, the 311-residue chain is tRNA-cytidine(32) 2-sulfurtransferase (311 aa).

Residues 47-52 carry the PP-loop motif motif; sequence SGGKDS. 3 residues coordinate [4Fe-4S] cluster: C122, C125, and C213.

Belongs to the TtcA family. As to quaternary structure, homodimer. The cofactor is Mg(2+). Requires [4Fe-4S] cluster as cofactor.

The protein localises to the cytoplasm. The enzyme catalyses cytidine(32) in tRNA + S-sulfanyl-L-cysteinyl-[cysteine desulfurase] + AH2 + ATP = 2-thiocytidine(32) in tRNA + L-cysteinyl-[cysteine desulfurase] + A + AMP + diphosphate + H(+). It functions in the pathway tRNA modification. Its function is as follows. Catalyzes the ATP-dependent 2-thiolation of cytidine in position 32 of tRNA, to form 2-thiocytidine (s(2)C32). The sulfur atoms are provided by the cysteine/cysteine desulfurase (IscS) system. The polypeptide is tRNA-cytidine(32) 2-sulfurtransferase (Escherichia coli O157:H7).